The sequence spans 217 residues: Putative cobalt transport protein CbiM (217 aa).

6 helical membrane passes run 8 to 28, 44 to 64, 74 to 94, 107 to 127, 139 to 161, and 181 to 201; these read LPPE…VYGA, LIAV…PSVT, GIAV…IVLL, TLGA…WIAF, VFAA…LALA, and IFAV…VMLV.

This sequence belongs to the CbiM family. In terms of assembly, forms an energy-coupling factor (ECF) transporter complex composed of an ATP-binding protein (A component, CbiO), a transmembrane protein (T component, CbiQ) and 2 possible substrate-capture proteins (S components, CbiM and CbiN) of unknown stoichimetry.

The protein localises to the cell membrane. It functions in the pathway cofactor biosynthesis; adenosylcobalamin biosynthesis. In terms of biological role, part of the energy-coupling factor (ECF) transporter complex CbiMNOQ involved in cobalt import. The polypeptide is Putative cobalt transport protein CbiM (Archaeoglobus fulgidus (strain ATCC 49558 / DSM 4304 / JCM 9628 / NBRC 100126 / VC-16)).